Consider the following 232-residue polypeptide: Nuclear transcription factor Y subunit nfyc-1 (232 aa).

The tract at residues 191–232 is disordered; the sequence is TVPTTSTNGPGHMSEDSFQDPNMHSDFHQRTSNSSVNRSHHN. The segment covering 220-232 has biased composition (polar residues); sequence RTSNSSVNRSHHN.

This sequence belongs to the NFYC/HAP5 subunit family. As to quaternary structure, forms two NF-Y heterotrimeric transcription factor complexes: the nfya-1-NF-Y complex is composed of nfya-1, nfyb-1 and nfyc-1, and the nfya-2-NF-Y complex is composed of nfya-2, nfyb-1 and nfyc-1. Interacts with nfyb-1; the interaction is direct and is required for the interaction with either nfya-1 or nfya-2, and subsequent binding of the complex to the 5'-CCAAT-3' box motif in DNA. Expressed in certain parts of the gonads with high expression in fertilized oocytes in the uterus and mature oocytes from the distal to the proximal arm of the gonad, but weak expression in the syncytial ovaries and immature oocytes at the beginning of the proximal arm of the gonad. Expressed in the excretory cell, secretory cells in the pharyngeal terminal bulb wall, in the small ganglia surrounding the pharynx and in the neurons running anteriorly to the sensory organs in the head. Not expressed in the intestine, the hypodermis or body wall muscle surrounding the pseudocoelomic space.

The protein localises to the nucleus. It is found in the cytoplasm. It localises to the perikaryon. In terms of biological role, component of sequence-specific heterotrimeric transcription factor (nfya-1-NF-Y and nfya-2-NF-Y) complexes which specifically recognize a 5'-CCAAT-3' box motif found in the promoters of its target genes to regulate their expression and control cellular identity in particular tissue types. In association with the components in the NF-Y complexes, represses the expression of the T-box transcription factor tbx-2 throughout larval development, which most likely restricts its expression to certain tissues. May act to repress txb-2 expression in conjunction with tbx-2 itself, which has an autoregulatory role. In association with the components in the nfya-1-NF-Y complex, negatively regulates the expression of the homeobox protein egl-5 to spatially restrict its expression in tissues such as the head. May regulate egl-5 expression in association with the mes-2-mes-3-mes-6 complex. In Caenorhabditis elegans, this protein is Nuclear transcription factor Y subunit nfyc-1.